The primary structure comprises 351 residues: Peptide chain release factor 1 (351 aa).

Gln-229 is subject to N5-methylglutamine. The segment at 278 to 297 is disordered; the sequence is RVDDERSADRAAQVGSGDRS.

This sequence belongs to the prokaryotic/mitochondrial release factor family. Post-translationally, methylated by PrmC. Methylation increases the termination efficiency of RF1.

It is found in the cytoplasm. Peptide chain release factor 1 directs the termination of translation in response to the peptide chain termination codons UAG and UAA. This Roseobacter denitrificans (strain ATCC 33942 / OCh 114) (Erythrobacter sp. (strain OCh 114)) protein is Peptide chain release factor 1.